We begin with the raw amino-acid sequence, 277 residues long: Putative gamma-glutamylcyclotransferase YkqA (277 aa).

8 to 11 (YGTL) lines the substrate pocket. Catalysis depends on Glu-205, which acts as the Proton acceptor.

Belongs to the gamma-glutamylcyclotransferase family.

In terms of biological role, putative gamma-glutamylcyclotransferase. This chain is Putative gamma-glutamylcyclotransferase YkqA (ykqA), found in Bacillus subtilis (strain 168).